A 362-amino-acid polypeptide reads, in one-letter code: Chalcone synthase A (362 aa).

The active site involves Cys168.

It belongs to the thiolase-like superfamily. Chalcone/stilbene synthases family.

It catalyses the reaction (E)-4-coumaroyl-CoA + 3 malonyl-CoA + 3 H(+) = 2',4,4',6'-tetrahydroxychalcone + 3 CO2 + 4 CoA. Its pathway is secondary metabolite biosynthesis; flavonoid biosynthesis. In terms of biological role, the primary product of this enzyme is 4,2',4',6'-tetrahydroxychalcone (also termed naringenin-chalcone or chalcone) which can under specific conditions spontaneously isomerize into naringenin. The polypeptide is Chalcone synthase A (CHSA) (Ipomoea trifida (Morning glory)).